We begin with the raw amino-acid sequence, 228 residues long: Cytochrome c oxidase subunit 2 (228 aa).

Over Met-1 to His-26 the chain is Mitochondrial intermembrane. The chain crosses the membrane as a helical span at residues Thr-27–Phe-47. Residues Asn-48–Thr-60 lie on the Mitochondrial matrix side of the membrane. Residues Ile-61–Leu-81 traverse the membrane as a helical segment. Topologically, residues Arg-82–Asn-228 are mitochondrial intermembrane. Cu cation is bound by residues His-161, Cys-196, Glu-198, Cys-200, His-204, and Met-207. Residue Glu-198 participates in Mg(2+) binding.

This sequence belongs to the cytochrome c oxidase subunit 2 family. In terms of assembly, component of the cytochrome c oxidase (complex IV, CIV), a multisubunit enzyme composed of a catalytic core of 3 subunits and several supernumerary subunits. The complex exists as a monomer or a dimer and forms supercomplexes (SCs) in the inner mitochondrial membrane with ubiquinol-cytochrome c oxidoreductase (cytochrome b-c1 complex, complex III, CIII). It depends on Cu cation as a cofactor.

The protein resides in the mitochondrion inner membrane. It catalyses the reaction 4 Fe(II)-[cytochrome c] + O2 + 8 H(+)(in) = 4 Fe(III)-[cytochrome c] + 2 H2O + 4 H(+)(out). In terms of biological role, component of the cytochrome c oxidase, the last enzyme in the mitochondrial electron transport chain which drives oxidative phosphorylation. The respiratory chain contains 3 multisubunit complexes succinate dehydrogenase (complex II, CII), ubiquinol-cytochrome c oxidoreductase (cytochrome b-c1 complex, complex III, CIII) and cytochrome c oxidase (complex IV, CIV), that cooperate to transfer electrons derived from NADH and succinate to molecular oxygen, creating an electrochemical gradient over the inner membrane that drives transmembrane transport and the ATP synthase. Cytochrome c oxidase is the component of the respiratory chain that catalyzes the reduction of oxygen to water. Electrons originating from reduced cytochrome c in the intermembrane space (IMS) are transferred via the dinuclear copper A center (CU(A)) of subunit 2 and heme A of subunit 1 to the active site in subunit 1, a binuclear center (BNC) formed by heme A3 and copper B (CU(B)). The BNC reduces molecular oxygen to 2 water molecules using 4 electrons from cytochrome c in the IMS and 4 protons from the mitochondrial matrix. The chain is Cytochrome c oxidase subunit 2 (COXII) from Anopheles quadrimaculatus (Common malaria mosquito).